The following is a 285-amino-acid chain: MPITTAASRLGTSAFSNAAPIELRSNTNKAEIAQVIAAIYRQVLGNDYVLQSERLKGLESLLTNGNITVQEFVRQLAKSNLYKSKFFSNNFHSRVTELNFKHLLGRAPYDESEIIYHLDLYQTKGYEADIDSYIDSAEYQTNFADNIVPYYRGFNNQLGQKTVGFTRIFQLYRGYATSDRSQIPGASARLANELARNSASTVIAPAGSNNGFAYRASVKGKTPSTAFQGSQAFGSGRLYRVEVAAISQPAIQVRRINKRSIHRRTIQLFPTSSTSQWQIASVTPL.

The region spanning 1-180 (MPITTAASRL…LYRGYATSDR (180 aa)) is the PBS-linker domain.

Belongs to the phycobilisome linker protein family.

Its subcellular location is the cellular thylakoid membrane. In terms of biological role, rod linker protein, associated with phycocyanin. Linker polypeptides determine the state of aggregation and the location of the disk-shaped phycobiliprotein units within the phycobilisome and modulate their spectroscopic properties in order to mediate a directed and optimal energy transfer. This is Phycobilisome 31.6 kDa linker polypeptide, phycocyanin-associated, rod (cpcI3) from Microchaete diplosiphon (Fremyella diplosiphon).